We begin with the raw amino-acid sequence, 488 residues long: Argininosuccinate lyase (488 aa).

Belongs to the lyase 1 family. Argininosuccinate lyase subfamily.

It localises to the cytoplasm. It catalyses the reaction 2-(N(omega)-L-arginino)succinate = fumarate + L-arginine. The protein operates within amino-acid biosynthesis; L-arginine biosynthesis; L-arginine from L-ornithine and carbamoyl phosphate: step 3/3. The sequence is that of Argininosuccinate lyase from Corynebacterium jeikeium (strain K411).